A 268-amino-acid chain; its full sequence is Tryptophan synthase alpha chain (268 aa).

Residues E49 and D60 each act as proton acceptor in the active site.

Belongs to the TrpA family. As to quaternary structure, tetramer of two alpha and two beta chains.

The enzyme catalyses (1S,2R)-1-C-(indol-3-yl)glycerol 3-phosphate + L-serine = D-glyceraldehyde 3-phosphate + L-tryptophan + H2O. It participates in amino-acid biosynthesis; L-tryptophan biosynthesis; L-tryptophan from chorismate: step 5/5. Its function is as follows. The alpha subunit is responsible for the aldol cleavage of indoleglycerol phosphate to indole and glyceraldehyde 3-phosphate. This chain is Tryptophan synthase alpha chain, found in Citrobacter koseri (strain ATCC BAA-895 / CDC 4225-83 / SGSC4696).